Consider the following 170-residue polypeptide: Peptide deformylase 1 (170 aa).

Residues Cys92 and His135 each coordinate Fe cation. Glu136 is a catalytic residue. His139 contributes to the Fe cation binding site.

Belongs to the polypeptide deformylase family. The cofactor is Fe(2+).

The enzyme catalyses N-terminal N-formyl-L-methionyl-[peptide] + H2O = N-terminal L-methionyl-[peptide] + formate. Its function is as follows. Removes the formyl group from the N-terminal Met of newly synthesized proteins. Requires at least a dipeptide for an efficient rate of reaction. N-terminal L-methionine is a prerequisite for activity but the enzyme has broad specificity at other positions. The protein is Peptide deformylase 1 of Coxiella burnetii (strain RSA 493 / Nine Mile phase I).